Here is an 892-residue protein sequence, read N- to C-terminus: Microsomal triglyceride transfer protein homolog (892 aa).

Positions 1–19 (MFSSRIWLLLAVTVGVCLA) are cleaved as a signal peptide.

In terms of assembly, heterodimer; heterodimerizes with protein disulfide isomerase.

It localises to the endoplasmic reticulum. Functionally, catalyzes the transport of cholesteryl ester, and phospholipid between phospholipid surfaces. Does not catalyze transport of triglycerides. Required for the assembly and secretion of plasma lipoproteins that contain apolipoprotein B. Required for normal expression of klf-3. The protein is Microsomal triglyceride transfer protein homolog of Caenorhabditis elegans.